The following is a 695-amino-acid chain: Protein-glutamine gamma-glutamyltransferase 2 (695 aa).

Active-site residues include Cys-272, His-332, and Asp-355. Ca(2+) contacts are provided by Asn-395, Asp-397, Glu-434, Glu-444, and Glu-449. GTP contacts are provided by residues 476 to 482 (SIKHAQP) and 578 to 581 (ANIP).

The protein belongs to the transglutaminase superfamily. Transglutaminase family. In terms of assembly, monomer. Requires Ca(2+) as cofactor.

The protein localises to the cytoplasm. The protein resides in the cytosol. Its subcellular location is the nucleus. It is found in the chromosome. It localises to the secreted. The protein localises to the extracellular space. The protein resides in the extracellular matrix. Its subcellular location is the cell membrane. It is found in the mitochondrion. The catalysed reaction is L-glutaminyl-[protein] + L-lysyl-[protein] = [protein]-L-lysyl-N(6)-5-L-glutamyl-[protein] + NH4(+). It carries out the reaction L-glutaminyl-[protein] + serotonin = 5-serotonyl-L-glutamyl-[protein] + NH4(+). It catalyses the reaction L-glutaminyl-[protein] + dopamine = 5-dopaminyl-L-glutamyl-[protein] + NH4(+). The enzyme catalyses L-glutaminyl-[protein] + histamine = 5-histaminyl-L-glutamyl-[protein] + NH4(+). The catalysed reaction is L-glutaminyl-[protein] + (R)-noradrenaline = 5-(R)-noradrenalinyl-L-glutamyl-[protein] + NH4(+). It carries out the reaction L-glutaminyl-[protein] + H2O = L-glutamyl-[protein] + NH4(+). Its activity is regulated as follows. Acyltransferase activity is regulated by the binding of GTP and Ca(2+): inactivated by GTP, which stabilizes its closed structure, thereby obstructing the accessibility of substrates to the active sites. In contrast, Ca(2+) acts as a cofactor by inducing conformational change to the active open form. In absence of Ca(2+), Mg(2+) may bind Ca(2+)-binding sites, promoting GTP-binding and subsequent inhibition of the acyltransferase activity. Functionally, calcium-dependent acyltransferase that catalyzes the formation of covalent bonds between peptide-bound glutamine and various primary amines, such as gamma-amino group of peptide-bound lysine, or mono- and polyamines, thereby producing cross-linked or aminated proteins, respectively. Involved in many biological processes, such as bone development, angiogenesis, wound healing, cellular differentiation, chromatin modification and apoptosis. Acts as a protein-glutamine gamma-glutamyltransferase by mediating the cross-linking of proteins: under physiological conditions, the protein cross-linking activity is inhibited by GTP; inhibition is relieved by Ca(2+) in response to various stresses. When secreted, catalyzes cross-linking of proteins of the extracellular matrix, resulting in the formation of scaffolds. Plays a key role during apoptosis, both by (1) promoting the cross-linking of cytoskeletal proteins resulting in condensation of the cytoplasm, and by (2) mediating cross-linking proteins of the extracellular matrix, resulting in the irreversible formation of scaffolds that stabilize the integrity of the dying cells before their clearance by phagocytosis, thereby preventing the leakage of harmful intracellular components. In addition to protein cross-linking, can use different monoamine substrates to catalyze a vast array of protein post-translational modifications: mediates aminylation of serotonin, dopamine, noradrenaline or histamine into glutamine residues of target proteins to generate protein serotonylation, dopaminylation, noradrenalinylation or histaminylation, respectively. Mediates protein serotonylation of small GTPases during activation and aggregation of platelets, leading to constitutive activation of these GTPases. Plays a key role in chromatin organization by mediating serotonylation and dopaminylation of histone H3. Catalyzes serotonylation of 'Gln-5' of histone H3 (H3Q5ser) during serotonergic neuron differentiation, thereby facilitating transcription. Acts as a mediator of neurotransmission-independent role of nuclear dopamine in ventral tegmental area (VTA) neurons: catalyzes dopaminylation of 'Gln-5' of histone H3 (H3Q5dop), thereby regulating relapse-related transcriptional plasticity in the reward system. Also acts as a protein deamidase by mediating the side chain deamidation of specific glutamine residues of proteins to glutamate. May also act as an isopeptidase cleaving the previously formed cross-links. Also able to participate in signaling pathways independently of its acyltransferase activity: acts as a signal transducer in alpha-1 adrenergic receptor-mediated stimulation of phospholipase C-delta (PLCD) activity and is required for coupling alpha-1 adrenergic agonists to the stimulation of phosphoinositide lipid metabolism. The protein is Protein-glutamine gamma-glutamyltransferase 2 of Pagrus major (Red sea bream).